We begin with the raw amino-acid sequence, 249 residues long: 5'-nucleotidase SurE (249 aa).

Residues aspartate 8, aspartate 9, serine 39, and asparagine 91 each contribute to the a divalent metal cation site.

Belongs to the SurE nucleotidase family. A divalent metal cation is required as a cofactor.

Its subcellular location is the cytoplasm. The catalysed reaction is a ribonucleoside 5'-phosphate + H2O = a ribonucleoside + phosphate. Its function is as follows. Nucleotidase that shows phosphatase activity on nucleoside 5'-monophosphates. In Pseudomonas fluorescens (strain SBW25), this protein is 5'-nucleotidase SurE.